The following is a 181-amino-acid chain: CDP-diacylglycerol--glycerol-3-phosphate 3-phosphatidyltransferase (181 aa).

A run of 4 helical transmembrane segments spans residues 8–28 (PNYL…LFYI), 35–55 (KLGA…GYIA), 64–84 (FGKM…TIML), and 148–168 (IIYL…LTII).

This sequence belongs to the CDP-alcohol phosphatidyltransferase class-I family.

It localises to the cell membrane. The catalysed reaction is a CDP-1,2-diacyl-sn-glycerol + sn-glycerol 3-phosphate = a 1,2-diacyl-sn-glycero-3-phospho-(1'-sn-glycero-3'-phosphate) + CMP + H(+). The protein operates within phospholipid metabolism; phosphatidylglycerol biosynthesis; phosphatidylglycerol from CDP-diacylglycerol: step 1/2. In terms of biological role, this protein catalyzes the committed step to the synthesis of the acidic phospholipids. This is CDP-diacylglycerol--glycerol-3-phosphate 3-phosphatidyltransferase (pgsA) from Rickettsia prowazekii (strain Madrid E).